The chain runs to 368 residues: 1-aminocyclopropane-1-carboxylate oxidase (368 aa).

In terms of domain architecture, Fe2OG dioxygenase spans 177 to 307; that stretch reads PFILMGLLHY…RFSIPFFLDP (131 aa). Residues 191 to 226 are disordered; the sequence is HQEQEEEQEDDESNNGGKKSPNPDESKKPEVEKFGT. A compositionally biased stretch (acidic residues) spans 194–203; the sequence is QEEEQEDDES. Over residues 211–223 the composition is skewed to basic and acidic residues; sequence PNPDESKKPEVEK. Fe cation-binding residues include His229, Asp231, and His287. Arg298 contacts 2-oxoglutarate.

This sequence belongs to the iron/ascorbate-dependent oxidoreductase family. It depends on Fe(2+) as a cofactor.

It catalyses the reaction 1-aminocyclopropane-1-carboxylate + L-ascorbate + O2 = ethene + L-dehydroascorbate + hydrogen cyanide + CO2 + 2 H2O. The protein operates within alkene biosynthesis; ethylene biosynthesis via S-adenosyl-L-methionine; ethylene from S-adenosyl-L-methionine: step 2/2. Functionally, involved in ethylene biosynthesis. Overexpression induces overproduction of ethylene. The sequence is that of 1-aminocyclopropane-1-carboxylate oxidase (aco) from Dictyostelium discoideum (Social amoeba).